The primary structure comprises 531 residues: Putative F-box protein At2g02890 (531 aa).

The F-box domain occupies 141–188; sequence RHSSSLTNDLIEEILSRLHSKSVARFRCVSKQCASMFASPYFKKLFQT.

This chain is Putative F-box protein At2g02890, found in Arabidopsis thaliana (Mouse-ear cress).